The sequence spans 259 residues: Putative protein phosphatase (259 aa).

The PPM-type phosphatase domain maps to 8–255 (LFASLSKKGP…DNITLNLINL (248 aa)).

It catalyses the reaction O-phospho-L-seryl-[protein] + H2O = L-seryl-[protein] + phosphate. The catalysed reaction is O-phospho-L-threonyl-[protein] + H2O = L-threonyl-[protein] + phosphate. This chain is Putative protein phosphatase, found in Mycoplasma pneumoniae (strain ATCC 29342 / M129 / Subtype 1) (Mycoplasmoides pneumoniae).